The primary structure comprises 113 residues: Hydrogenase maturation factor HypA 2 (113 aa).

Residue H2 participates in Ni(2+) binding. C73, C76, C89, and C92 together coordinate Zn(2+).

This sequence belongs to the HypA/HybF family.

In terms of biological role, involved in the maturation of [NiFe] hydrogenases. Required for nickel insertion into the metal center of the hydrogenase. The chain is Hydrogenase maturation factor HypA 2 from Bradyrhizobium diazoefficiens (strain JCM 10833 / BCRC 13528 / IAM 13628 / NBRC 14792 / USDA 110).